The following is an 89-amino-acid chain: Small ribosomal subunit protein uS19 (89 aa).

The protein belongs to the universal ribosomal protein uS19 family.

In terms of biological role, protein S19 forms a complex with S13 that binds strongly to the 16S ribosomal RNA. This is Small ribosomal subunit protein uS19 from Bacteroides thetaiotaomicron (strain ATCC 29148 / DSM 2079 / JCM 5827 / CCUG 10774 / NCTC 10582 / VPI-5482 / E50).